The chain runs to 265 residues: Tryptophan 2,3-dioxygenase (265 aa).

Substrate-binding positions include 38–42 (FIVVH) and arginine 104. Residue histidine 223 participates in heme binding. Threonine 237 provides a ligand contact to substrate.

This sequence belongs to the tryptophan 2,3-dioxygenase family. In terms of assembly, homotetramer. Requires heme as cofactor.

It catalyses the reaction L-tryptophan + O2 = N-formyl-L-kynurenine. It participates in amino-acid degradation; L-tryptophan degradation via kynurenine pathway; L-kynurenine from L-tryptophan: step 1/2. Its function is as follows. Heme-dependent dioxygenase that catalyzes the oxidative cleavage of the L-tryptophan (L-Trp) pyrrole ring and converts L-tryptophan to N-formyl-L-kynurenine. Catalyzes the oxidative cleavage of the indole moiety. In Anaeromyxobacter sp. (strain K), this protein is Tryptophan 2,3-dioxygenase.